The following is a 125-amino-acid chain: MTERLRIALIAHDQKKDDMVAFAKAHEQALARFDIVATGTTGSLILDACPSLSIQRVKSGPLGGDQQIGAMIAEGTVEVLIFFIDPLSPLPHDVDVKALTRLGSVYDIPMALNRATAEKLIKALD.

The MGS-like domain occupies 1–125 (MTERLRIALI…TAEKLIKALD (125 aa)). Residues His-12, Lys-16, 38–41 (TGTT), and 59–60 (SG) each bind substrate. Asp-65 acts as the Proton donor/acceptor in catalysis. Residue His-92 coordinates substrate.

Belongs to the methylglyoxal synthase family.

The enzyme catalyses dihydroxyacetone phosphate = methylglyoxal + phosphate. Its function is as follows. Catalyzes the formation of methylglyoxal from dihydroxyacetone phosphate. This is Methylglyoxal synthase from Brucella anthropi (strain ATCC 49188 / DSM 6882 / CCUG 24695 / JCM 21032 / LMG 3331 / NBRC 15819 / NCTC 12168 / Alc 37) (Ochrobactrum anthropi).